Reading from the N-terminus, the 153-residue chain is Putative phosphatidylglycerol/phosphatidylinositol transfer protein DDB_G0285639 (153 aa).

The first 21 residues, 1–21 (MIIKILLLIISISLFLNISIG), serve as a signal peptide directing secretion. N-linked (GlcNAc...) asparagine glycans are attached at residues N17, N61, N87, N117, and N140.

The protein belongs to the NPC2 family. As to quaternary structure, monomer.

Catalyzes the intermembrane transfer of phosphatidylglycerol and phosphatidylinositol. In Dictyostelium discoideum (Social amoeba), this protein is Putative phosphatidylglycerol/phosphatidylinositol transfer protein DDB_G0285639.